Here is a 531-residue protein sequence, read N- to C-terminus: Light-independent protochlorophyllide reductase subunit B (531 aa).

Residue Asp-36 participates in [4Fe-4S] cluster binding. Asp-287 acts as the Proton donor in catalysis. Gly-422 to Leu-423 lines the substrate pocket.

This sequence belongs to the ChlB/BchB/BchZ family. Protochlorophyllide reductase is composed of three subunits; BchL, BchN and BchB. Forms a heterotetramer of two BchB and two BchN subunits. [4Fe-4S] cluster serves as cofactor.

The catalysed reaction is chlorophyllide a + oxidized 2[4Fe-4S]-[ferredoxin] + 2 ADP + 2 phosphate = protochlorophyllide a + reduced 2[4Fe-4S]-[ferredoxin] + 2 ATP + 2 H2O. It participates in porphyrin-containing compound metabolism; bacteriochlorophyll biosynthesis (light-independent). Its function is as follows. Component of the dark-operative protochlorophyllide reductase (DPOR) that uses Mg-ATP and reduced ferredoxin to reduce ring D of protochlorophyllide (Pchlide) to form chlorophyllide a (Chlide). This reaction is light-independent. The NB-protein (BchN-BchB) is the catalytic component of the complex. The protein is Light-independent protochlorophyllide reductase subunit B of Rhodopseudomonas palustris (strain BisA53).